Here is a 236-residue protein sequence, read N- to C-terminus: DNA repair protein RecO (236 aa).

It belongs to the RecO family.

Its function is as follows. Involved in DNA repair and RecF pathway recombination. This is DNA repair protein RecO from Rickettsia typhi (strain ATCC VR-144 / Wilmington).